The following is a 320-amino-acid chain: Formimidoylglutamase (320 aa).

6 residues coordinate Mn(2+): H125, D153, H155, D157, D244, and D246.

Belongs to the arginase family. Mn(2+) is required as a cofactor.

It carries out the reaction N-formimidoyl-L-glutamate + H2O = formamide + L-glutamate. It participates in amino-acid degradation; L-histidine degradation into L-glutamate; L-glutamate from N-formimidoyl-L-glutamate (hydrolase route): step 1/1. Its function is as follows. Catalyzes the conversion of N-formimidoyl-L-glutamate to L-glutamate and formamide. The polypeptide is Formimidoylglutamase (Rhodococcus jostii (strain RHA1)).